We begin with the raw amino-acid sequence, 316 residues long: Secreted effector protein SifB (316 aa).

It belongs to the Sif family.

It is found in the secreted. It localises to the host cytoplasm. In terms of biological role, effector proteins function to alter host cell physiology and promote bacterial survival in host tissues. In Salmonella typhimurium (strain LT2 / SGSC1412 / ATCC 700720), this protein is Secreted effector protein SifB (sifB).